A 77-amino-acid chain; its full sequence is Sec-independent protein translocase protein TatA (77 aa).

The chain crosses the membrane as a helical span at residues 1–21; the sequence is MGSFSIWHWLIVLVIVMLVFG. Residues 40–77 form a disordered region; the sequence is KDGMKEGNTDEPATPTPAKELRDSTTIDVEAKEKSRQQ. Basic and acidic residues predominate over residues 58–77; sequence KELRDSTTIDVEAKEKSRQQ.

It belongs to the TatA/E family. In terms of assembly, the Tat system comprises two distinct complexes: a TatABC complex, containing multiple copies of TatA, TatB and TatC subunits, and a separate TatA complex, containing only TatA subunits. Substrates initially bind to the TatABC complex, which probably triggers association of the separate TatA complex to form the active translocon.

Its subcellular location is the cell inner membrane. Functionally, part of the twin-arginine translocation (Tat) system that transports large folded proteins containing a characteristic twin-arginine motif in their signal peptide across membranes. TatA could form the protein-conducting channel of the Tat system. The chain is Sec-independent protein translocase protein TatA from Cupriavidus metallidurans (strain ATCC 43123 / DSM 2839 / NBRC 102507 / CH34) (Ralstonia metallidurans).